A 629-amino-acid polypeptide reads, in one-letter code: MLLSELSHPNELHGLTVSQLEEIACQIRERHLQVVSTSGGHLGPGLGVVELTLALYQTLDLDSDRVVWDVGHQGYPHKLITGRFSQFDSLRQQNGVAGYLKRSESKFDHFGAGHASTSISAALGMAIARDRKGENHKCVAVIGDGALTGGMALEAINHAGHLPNTPLVVVLNDNDMSISPPVGALSSYLNKVRLSPPLQFLSDSVQESVKNIPLIGKDIPEELKNIKGSVRRLAVPKVGAVFEELGFTYMGPIDGHDIENLINTFNAAHRLKKPVLVHIVTTKGKGYPYAEADQVGYHAQSAFDLTTGKSIPSKKPKPVSYSKIFGQTLLKICEQDSKVIGITAAMATGTGLDILQKNIPEQYVDVGIAEQHAVTLAAGMSCDGLKPVVAIYSTFLQRAFDQLIHDVGIQNLPVSFVLDRAGIVGADGPTHQGQYDISYMRSIPNFVLMAPKDESELQRMLITSINHKGPTALRIPRGSGLGVAVMDEGWEPLNIGEAEILEEGNDILIIAYGSMVASAIETAEILKGMNINTCIVNARFVKPLDKNLIIPLASRIQKVVTMEEGTLIGGFGSAIVELFNDNEVNIPVYRIGIPDVLVDHASPDQSKEKLGLMPDQMADKIIQKFKLNN.

Thiamine diphosphate is bound by residues histidine 72 and glycine 113–alanine 115. Mg(2+) is bound at residue aspartate 144. Thiamine diphosphate is bound by residues glycine 145–alanine 146, asparagine 174, tyrosine 287, and glutamate 370. Position 174 (asparagine 174) interacts with Mg(2+).

Belongs to the transketolase family. DXPS subfamily. As to quaternary structure, homodimer. Mg(2+) is required as a cofactor. Thiamine diphosphate serves as cofactor.

It catalyses the reaction D-glyceraldehyde 3-phosphate + pyruvate + H(+) = 1-deoxy-D-xylulose 5-phosphate + CO2. The protein operates within metabolic intermediate biosynthesis; 1-deoxy-D-xylulose 5-phosphate biosynthesis; 1-deoxy-D-xylulose 5-phosphate from D-glyceraldehyde 3-phosphate and pyruvate: step 1/1. In terms of biological role, catalyzes the acyloin condensation reaction between C atoms 2 and 3 of pyruvate and glyceraldehyde 3-phosphate to yield 1-deoxy-D-xylulose-5-phosphate (DXP). This chain is 1-deoxy-D-xylulose-5-phosphate synthase, found in Prochlorococcus marinus (strain MIT 9312).